Reading from the N-terminus, the 461-residue chain is Growth/differentiation factor 7 (461 aa).

Positions 1–19 are cleaved as a signal peptide; that stretch reads MDLSAAAALCLWLLSACRP. A propeptide spanning residues 20 to 315 is cleaved from the precursor; it reads RDGLEAAAVL…ANLGGRRRRR (296 aa). N-linked (GlcNAc...) asparagine glycosylation is present at asparagine 79. Positions 287–360 are disordered; the sequence is LRAAAEPPPD…GHGRRGRSRC (74 aa). The span at 323 to 350 shows a compositional bias: gly residues; sequence GAQGSGGGGGGGGGGGGGGGGGGGGAGR. The segment covering 351-360 has biased composition (basic residues); the sequence is GHGRRGRSRC. Intrachain disulfides connect cysteine 360–cysteine 426, cysteine 389–cysteine 458, and cysteine 393–cysteine 460.

The protein belongs to the TGF-beta family. As to quaternary structure, homodimer; disulfide-linked.

It is found in the secreted. The polypeptide is Growth/differentiation factor 7 (Gdf7) (Mus musculus (Mouse)).